The primary structure comprises 104 residues: 10 kDa heat shock protein, mitochondrial (104 aa).

Phosphoserine is present on serine 81.

It belongs to the GroES chaperonin family. Homohexamer.

The protein resides in the mitochondrion matrix. Eukaryotic CPN10 homolog which is essential for mitochondrial protein biogenesis, together with CPN60. Binds to CPN60 in the presence of Mg-ATP and suppresses the ATPase activity of the latter. This chain is 10 kDa heat shock protein, mitochondrial (hsp10), found in Schizosaccharomyces pombe (strain 972 / ATCC 24843) (Fission yeast).